The following is a 118-amino-acid chain: Large ribosomal subunit protein uL24 (118 aa).

This sequence belongs to the universal ribosomal protein uL24 family. Part of the 50S ribosomal subunit.

Its function is as follows. One of two assembly initiator proteins, it binds directly to the 5'-end of the 23S rRNA, where it nucleates assembly of the 50S subunit. Functionally, one of the proteins that surrounds the polypeptide exit tunnel on the outside of the subunit. The sequence is that of Large ribosomal subunit protein uL24 from Synechococcus sp. (strain CC9902).